A 489-amino-acid chain; its full sequence is Rhamnulokinase (489 aa).

13–17 (ASSGR) contributes to the ATP binding site. A disulfide bridge connects residues cysteine 68 and cysteine 222. Substrate contacts are provided by residues glycine 83 and 236–238 (HDT). Aspartate 237 acts as the Proton acceptor in catalysis. Residue threonine 259 participates in ATP binding. Asparagine 296 contacts substrate. Glutamine 304 contacts ATP. Cysteine 353 and cysteine 370 are joined by a disulfide. An ATP-binding site is contributed by glycine 402. Cysteine 413 and cysteine 417 form a disulfide bridge.

It belongs to the rhamnulokinase family. Mg(2+) is required as a cofactor.

The catalysed reaction is L-rhamnulose + ATP = L-rhamnulose 1-phosphate + ADP + H(+). The protein operates within carbohydrate degradation; L-rhamnose degradation; glycerone phosphate from L-rhamnose: step 2/3. In terms of biological role, involved in the catabolism of L-rhamnose (6-deoxy-L-mannose). Catalyzes the transfer of the gamma-phosphate group from ATP to the 1-hydroxyl group of L-rhamnulose to yield L-rhamnulose 1-phosphate. In Enterobacter sp. (strain 638), this protein is Rhamnulokinase.